Consider the following 134-residue polypeptide: Fluoride-specific ion channel FluC 3 (134 aa).

Transmembrane regions (helical) follow at residues 4 to 24 (LIIL…FIML), 35 to 55 (MDIF…TSFF), 67 to 87 (MVGT…FGAV), and 100 to 120 (ICYL…GLMI). Residues Gly74 and Ser77 each coordinate Na(+).

This sequence belongs to the fluoride channel Fluc/FEX (TC 1.A.43) family.

The protein localises to the cell inner membrane. It carries out the reaction fluoride(in) = fluoride(out). Na(+) is not transported, but it plays an essential structural role and its presence is essential for fluoride channel function. Fluoride-specific ion channel. Important for reducing fluoride concentration in the cell, thus reducing its toxicity. The chain is Fluoride-specific ion channel FluC 3 from Yersinia pseudotuberculosis serotype I (strain IP32953).